Here is a 421-residue protein sequence, read N- to C-terminus: Nacrein-like protein M (421 aa).

The N-linked (GlcNAc...) asparagine glycan is linked to N27. One can recognise an Alpha-carbonic anhydrase domain in the interval 33–420 (AGFSYDRSIC…KNKVTVYKSF (388 aa)). Zn(2+) is bound by residues H132, H134, and H157. Residues 197 to 206 (DGFGDEPDDE) are compositionally biased toward acidic residues. The interval 197–303 (DGFGDEPDDE…GENGHKHGCR (107 aa)) is disordered. Positions 207–219 (ECKRILKGHHPDN) are enriched in basic and acidic residues. Over residues 220–295 (NENGNGDNGN…NNGDNGNNGE (76 aa)) the composition is skewed to low complexity. 24 consecutive repeat copies span residues 225–227 (GDN), 228–230 (GNN), 231–233 (GYN), 234–236 (GDN), 237–239 (GNN), 240–242 (GDN), 243–245 (GNN), 246–248 (GYN), 249–251 (GDN), 252–254 (GNN), 255–257 (GDN), 258–260 (GNN), 261–263 (GYN), 264–266 (GDN), 267–269 (GNN), 270–272 (GDN), 273–275 (GNN), 276–278 (GEN), 279–281 (GNN), 282–284 (GEN), 285–287 (GNN), 288–290 (GDN), 291–292 (GN), and 294–296 (GEN). The 24 X 3 AA approximate tandem repeats of G-X-N stretch occupies residues 225 to 296 (GDNGNNGYNG…NGDNGNNGEN (72 aa)). 361–362 (TT) is a binding site for substrate.

Belongs to the alpha-carbonic anhydrase family. As to quaternary structure, homooligomer; disulfide-linked. May also be disulfide-linked to insoluble organic matrix. Zn(2+) serves as cofactor. As to expression, expressed in the mantle.

The protein localises to the secreted. The protein resides in the extracellular space. It localises to the extracellular matrix. It carries out the reaction hydrogencarbonate + H(+) = CO2 + H2O. In terms of biological role, acts as a negative regulator for calcification in the shells of mollusks. May function both as a calcium concentrator and as a carbonic anhydrase required for production of carbonate ions, which are assembled to CaCO(3) at mineralization sites. Is important for shell formation in both the calcitic prismatic layer and the aragonitic nacreous layerr. Shows inhibitory activity of crystal formation when present in free state but, when attached to the insoluble matrix, may regulate the form and size of aragonite crystal. The chain is Nacrein-like protein M from Pinctada maxima (Silver-lipped pearl oyster).